Consider the following 218-residue polypeptide: Large ribosomal subunit protein uL3c (218 aa).

Residues 127–161 (GFSRGPMTHGSKNHREPGSTGAGTTPGRIYPGKRM) are disordered.

This sequence belongs to the universal ribosomal protein uL3 family. As to quaternary structure, part of the 50S ribosomal subunit.

The protein localises to the plastid. The protein resides in the organellar chromatophore. In terms of biological role, one of the primary rRNA binding proteins, it binds directly near the 3'-end of the 23S rRNA, where it nucleates assembly of the 50S subunit. This is Large ribosomal subunit protein uL3c (rpl3) from Paulinella chromatophora.